A 525-amino-acid polypeptide reads, in one-letter code: ATP synthase subunit alpha (525 aa).

An ATP-binding site is contributed by 169–176 (GDRQTGKT).

It belongs to the ATPase alpha/beta chains family. F-type ATPases have 2 components, CF(1) - the catalytic core - and CF(0) - the membrane proton channel. CF(1) has five subunits: alpha(3), beta(3), gamma(1), delta(1), epsilon(1). CF(0) has three main subunits: a(1), b(2) and c(9-12). The alpha and beta chains form an alternating ring which encloses part of the gamma chain. CF(1) is attached to CF(0) by a central stalk formed by the gamma and epsilon chains, while a peripheral stalk is formed by the delta and b chains.

It localises to the cell membrane. The enzyme catalyses ATP + H2O + 4 H(+)(in) = ADP + phosphate + 5 H(+)(out). Produces ATP from ADP in the presence of a proton gradient across the membrane. The alpha chain is a regulatory subunit. The polypeptide is ATP synthase subunit alpha (Mycoplasma capricolum subsp. capricolum (strain California kid / ATCC 27343 / NCTC 10154)).